Reading from the N-terminus, the 341-residue chain is MNSSPESTLEQASRLLAAAGSVAELDQVRVRYLGKKGEFTEQMKTLGTLSPEERKEFGQRVNQARDEFQRLLERRKAALEAEALARRLSSETIDVTLPGRGQRLGGLHPVTLTLRRITRLFRSVGFSVVEGPEIEDDFHNFEALNIPAHHPARAMHDTFYFSEHLLLRTHTSPVQIRVMESGQPPLRVIAPGRVYRCDSDLTHTPMFHQVEGFWVDEQVSFADLKGTLYEFLTGFFEKDCAVRFRPSYFPFTEPSAEVDIECVICDGRGCRVCKHSGWLEVMGCGMIHPRVFEAVGIDPERYSGFAFGLGVERLTMLRYGINDLRLFFENDLRFLRQFKPF.

Residue Glu-253 coordinates Mg(2+).

This sequence belongs to the class-II aminoacyl-tRNA synthetase family. Phe-tRNA synthetase alpha subunit type 1 subfamily. Tetramer of two alpha and two beta subunits. Mg(2+) is required as a cofactor.

Its subcellular location is the cytoplasm. It catalyses the reaction tRNA(Phe) + L-phenylalanine + ATP = L-phenylalanyl-tRNA(Phe) + AMP + diphosphate + H(+). The polypeptide is Phenylalanine--tRNA ligase alpha subunit (Methylococcus capsulatus (strain ATCC 33009 / NCIMB 11132 / Bath)).